The primary structure comprises 306 residues: Phosphatidylserine decarboxylase proenzyme (306 aa).

Catalysis depends on charge relay system; for autoendoproteolytic cleavage activity residues aspartate 98, histidine 155, and serine 259. Serine 259 (schiff-base intermediate with substrate; via pyruvic acid; for decarboxylase activity) is an active-site residue. Position 259 is a pyruvic acid (Ser); by autocatalysis (serine 259).

This sequence belongs to the phosphatidylserine decarboxylase family. PSD-B subfamily. Prokaryotic type I sub-subfamily. In terms of assembly, heterodimer of a large membrane-associated beta subunit and a small pyruvoyl-containing alpha subunit. The cofactor is pyruvate. Is synthesized initially as an inactive proenzyme. Formation of the active enzyme involves a self-maturation process in which the active site pyruvoyl group is generated from an internal serine residue via an autocatalytic post-translational modification. Two non-identical subunits are generated from the proenzyme in this reaction, and the pyruvate is formed at the N-terminus of the alpha chain, which is derived from the carboxyl end of the proenzyme. The autoendoproteolytic cleavage occurs by a canonical serine protease mechanism, in which the side chain hydroxyl group of the serine supplies its oxygen atom to form the C-terminus of the beta chain, while the remainder of the serine residue undergoes an oxidative deamination to produce ammonia and the pyruvoyl prosthetic group on the alpha chain. During this reaction, the Ser that is part of the protease active site of the proenzyme becomes the pyruvoyl prosthetic group, which constitutes an essential element of the active site of the mature decarboxylase.

The protein localises to the cell membrane. It catalyses the reaction a 1,2-diacyl-sn-glycero-3-phospho-L-serine + H(+) = a 1,2-diacyl-sn-glycero-3-phosphoethanolamine + CO2. The protein operates within phospholipid metabolism; phosphatidylethanolamine biosynthesis; phosphatidylethanolamine from CDP-diacylglycerol: step 2/2. Its function is as follows. Catalyzes the formation of phosphatidylethanolamine (PtdEtn) from phosphatidylserine (PtdSer). The protein is Phosphatidylserine decarboxylase proenzyme of Nitrosococcus oceani (strain ATCC 19707 / BCRC 17464 / JCM 30415 / NCIMB 11848 / C-107).